The chain runs to 567 residues: MASSALICDTEQWKGLQAHVGEIQKTHLRHLMHDVERCKAMTAEYEGIYLDYSRQRATGETMEKLFKLAEAAKLKEKIEKMFRGDKINSTENRSVLHVALRAPRDEVINSNGVNVVPEVWGVKDKIKQFSETFRSGSWVGATGKALTNVVSVGIGGSFLGPLFVHAALQTDPEAAESAKGRQLRFLANVDPVDVARSIKDLDPETTLVVVVSKTFTTAETMLNARTLKEWIVSSLGPDAVAKHMIAVSTNLELVEKFGIDPKNAFAFWDWVGGRYSVCSAVGVLPLSLQYGFPIVQKFLEGAASIDKHFRSSSFEKNIPVLLGLLSVWNVSFLGYPARAILPYSQALEKFAPHIQQLSMESNGKGVSIDGVQLPFESGEIDFGEPGTNGQHSFYQLIHQGRVIPCDFIGVVKSQQPVYLKGEIVSNHDELMSNFFAQPDALAYGKTPEQLHSEKVPEHLIPHKTFQGNRPSLSLLLPSLSAYEIGQLLAIYEHRIAVQGFLWGINSFDQWGVELGKSLASQVRKSLHASRVEGKPVLGFNSSTTSLLTRYLAVEPSTPYNTTTLPKV.

Residues 156–157, 212–217, Q356, E360, H391, and K516 each bind D-glucose 6-phosphate; these read GS and SKTFTT. E360 serves as the catalytic Proton donor. Catalysis depends on residues H391 and K516.

Belongs to the GPI family. Homodimer.

The protein localises to the cytoplasm. It carries out the reaction alpha-D-glucose 6-phosphate = beta-D-fructose 6-phosphate. The protein operates within carbohydrate degradation; glycolysis; D-glyceraldehyde 3-phosphate and glycerone phosphate from D-glucose: step 2/4. In terms of biological role, catalyzes the conversion of glucose-6-phosphate to fructose-6-phosphate, the second step in glycolysis, and the reverse reaction during gluconeogenesis. This Oryza sativa subsp. japonica (Rice) protein is Glucose-6-phosphate isomerase, cytosolic A.